Reading from the N-terminus, the 187-residue chain is 1,6-anhydro-N-acetylmuramyl-L-alanine amidase AmpD (187 aa).

Residues serine 29–proline 167 enclose the N-acetylmuramoyl-L-alanine amidase domain. Residue histidine 34 participates in Zn(2+) binding. Residue glutamate 116 is the Proton acceptor of the active site. Histidine 154 and aspartate 164 together coordinate Zn(2+).

This sequence belongs to the N-acetylmuramoyl-L-alanine amidase 2 family. It depends on Zn(2+) as a cofactor.

The protein resides in the cytoplasm. The catalysed reaction is Hydrolyzes the link between N-acetylmuramoyl residues and L-amino acid residues in certain cell-wall glycopeptides.. In terms of biological role, involved in cell wall peptidoglycan recycling. Specifically cleaves the amide bond between the lactyl group of N-acetylmuramic acid and the alpha-amino group of the L-alanine in degradation products containing an anhydro N-acetylmuramyl moiety. The chain is 1,6-anhydro-N-acetylmuramyl-L-alanine amidase AmpD (ampD) from Salmonella typhimurium (strain LT2 / SGSC1412 / ATCC 700720).